Reading from the N-terminus, the 494-residue chain is Cysteine--tRNA ligase (494 aa).

Zn(2+) is bound at residue Cys29. The 'HIGH' region motif lies at 31 to 41 (VTVYDHCHIGH). Zn(2+)-binding residues include Cys209, His234, and Glu238. The 'KMSKS' region signature appears at 266–270 (KMSKS). ATP is bound at residue Lys269.

This sequence belongs to the class-I aminoacyl-tRNA synthetase family. As to quaternary structure, monomer. The cofactor is Zn(2+).

Its subcellular location is the cytoplasm. It catalyses the reaction tRNA(Cys) + L-cysteine + ATP = L-cysteinyl-tRNA(Cys) + AMP + diphosphate. In Geotalea uraniireducens (strain Rf4) (Geobacter uraniireducens), this protein is Cysteine--tRNA ligase.